The sequence spans 134 residues: Large ribosomal subunit protein mL41 (134 aa).

The transit peptide at 1-13 (MGFLTAVTQGLVR) directs the protein to the mitochondrion.

Belongs to the mitochondrion-specific ribosomal protein mL41 family. As to quaternary structure, component of the mitochondrial ribosome large subunit (39S) which comprises a 16S rRNA and about 50 distinct proteins. Interacts with BCL2. Was also identified in the 28S mitochondrial ribosome.

The protein localises to the mitochondrion. Component of the mitochondrial ribosome large subunit. Also involved in apoptosis and cell cycle. Enhances p53/TP53 stability, thereby contributing to p53/TP53-induced apoptosis in response to growth-inhibitory condition. Enhances p53/TP53 translocation to the mitochondria. Has the ability to arrest the cell cycle at the G1 phase, possibly by stabilizing the CDKN1A and CDKN1B (p27Kip1) proteins. This Rattus norvegicus (Rat) protein is Large ribosomal subunit protein mL41 (Mrpl41).